A 98-amino-acid polypeptide reads, in one-letter code: Small ribosomal subunit protein uS19 (98 aa).

Positions 77 to 98 (TRTYRGHAGGKAEKGGSAPKRK) are disordered.

The protein belongs to the universal ribosomal protein uS19 family.

Protein S19 forms a complex with S13 that binds strongly to the 16S ribosomal RNA. This Prosthecochloris aestuarii (strain DSM 271 / SK 413) protein is Small ribosomal subunit protein uS19.